Reading from the N-terminus, the 312-residue chain is MEEECRVLSIQSHVVRGYVGNRAATFPLQVLGFEVDAVNSVQFSNHTGYSHWKGQVLNSDELQELYDGLKLNHVNQYDYVLTGYTRDKSFLAMVVDIVQELKQQNPRLVYVCDPVMGDQRNGEGAMYVPDDLLPVYREKVVPVADIITPNQFEAELLTGRKIHSQEEALEVMDMLHSMGPDTVVITSSNLLSPRGSDYLMALGSQRTRAPDGSVVTQRIRMEMHKVDAVFVGTGDLFAAMLLAWTHKHPNNLKVACEKTVSAMHHVLQRTIKCAKAKSGEGVKPSPAQLELRMVQSKKDIESPEIVVQATVL.

Met-1 is modified (N-acetylmethionine). Residues Ser-12 and Thr-47 each coordinate pyridoxal 5'-phosphate. Residues Ser-12 and Thr-47 each coordinate pyridoxamine. Residue Ser-59 is modified to Phosphoserine. Asp-113 contributes to the K(+) binding site. Residue Tyr-127 participates in pyridoxal 5'-phosphate binding. Thr-148 is a binding site for K(+). ADP is bound at residue Asn-150. Asn-150 serves as a coordination point for ATP. Ser-164 is modified (phosphoserine). Position 186 (Thr-186) interacts with K(+). An ADP-binding site is contributed by Thr-186 to Ser-187. Residue Thr-186–Ser-187 coordinates ATP. Ser-213 carries the phosphoserine modification. ADP-binding positions include Met-223–Val-226 and Thr-233–Gly-234. Residues Met-223–Val-226 and Thr-233–Gly-234 contribute to the ATP site. Residue Gly-232–Asp-235 coordinates pyridoxal 5'-phosphate. Residue Asp-235 coordinates pyridoxamine. The active-site Proton acceptor is the Asp-235. The residue at position 285 (Ser-285) is a Phosphoserine.

This sequence belongs to the pyridoxine kinase family. As to quaternary structure, homodimer. Zn(2+) serves as cofactor. Requires Mg(2+) as cofactor. In terms of tissue distribution, ubiquitous.

The protein localises to the cytoplasm. Its subcellular location is the cytosol. The enzyme catalyses pyridoxal + ATP = pyridoxal 5'-phosphate + ADP + H(+). It catalyses the reaction pyridoxamine + ATP = pyridoxamine 5'-phosphate + ADP + H(+). The catalysed reaction is pyridoxine + ATP = pyridoxine 5'-phosphate + ADP + H(+). It participates in cofactor metabolism; pyridoxal 5'-phosphate salvage; pyridoxal 5'-phosphate from pyridoxal: step 1/1. It functions in the pathway cofactor metabolism; pyridoxal 5'-phosphate salvage; pyridoxine 5'-phosphate from pyridoxine: step 1/1. The protein operates within cofactor metabolism; pyridoxal 5'-phosphate salvage; pyridoxamine 5'-phosphate from pyridoxamine: step 1/1. Activated by K(+). Activity is increased in the presence of Na(+). Catalyzes the phosphorylation of the dietary vitamin B6 vitamers pyridoxal (PL), pyridoxine (PN) and pyridoxamine (PM) to form pyridoxal 5'-phosphate (PLP), pyridoxine 5'-phosphate (PNP) and pyridoxamine 5'-phosphate (PMP), respectively. PLP is the active form of vitamin B6, and acts as a cofactor for over 140 different enzymatic reactions. This is Pyridoxal kinase (PDXK) from Ovis aries (Sheep).